A 380-amino-acid polypeptide reads, in one-letter code: 1-deoxy-D-xylulose 5-phosphate reductoisomerase (380 aa).

NADPH-binding residues include T10, G11, S12, I13, G35, and N121. K122 provides a ligand contact to 1-deoxy-D-xylulose 5-phosphate. Position 123 (E123) interacts with NADPH. D147 contributes to the Mn(2+) binding site. 1-deoxy-D-xylulose 5-phosphate is bound by residues S148, E149, S173, and H196. Position 149 (E149) interacts with Mn(2+). G202 provides a ligand contact to NADPH. 1-deoxy-D-xylulose 5-phosphate is bound by residues S209, N214, K215, and E218. E218 is a binding site for Mn(2+).

Belongs to the DXR family. Mg(2+) serves as cofactor. Mn(2+) is required as a cofactor.

It catalyses the reaction 2-C-methyl-D-erythritol 4-phosphate + NADP(+) = 1-deoxy-D-xylulose 5-phosphate + NADPH + H(+). Its pathway is isoprenoid biosynthesis; isopentenyl diphosphate biosynthesis via DXP pathway; isopentenyl diphosphate from 1-deoxy-D-xylulose 5-phosphate: step 1/6. Catalyzes the NADPH-dependent rearrangement and reduction of 1-deoxy-D-xylulose-5-phosphate (DXP) to 2-C-methyl-D-erythritol 4-phosphate (MEP). This Lachnospira eligens (strain ATCC 27750 / DSM 3376 / VPI C15-48 / C15-B4) (Eubacterium eligens) protein is 1-deoxy-D-xylulose 5-phosphate reductoisomerase.